The following is a 338-amino-acid chain: L-lysine 2,3-aminomutase (338 aa).

A Radical SAM core domain is found at 107–330 (HKYRNRLLFM…PKLAREIAGE (224 aa)). [4Fe-4S] cluster is bound by residues cysteine 121, cysteine 125, and cysteine 128. N6-(pyridoxal phosphate)lysine is present on lysine 333.

The protein belongs to the radical SAM superfamily. KamA family. [4Fe-4S] cluster is required as a cofactor. It depends on pyridoxal 5'-phosphate as a cofactor.

It carries out the reaction L-lysine = D-beta-lysine. Its function is as follows. With EpmA is involved in the beta-lysylation step of the post-translational modification of translation elongation factor P (EF-P) on 'Lys-34'. EpmB appears to act before EpmA. Displays lysine 2,3-aminomutase activity, producing (R)-beta-lysine from (S)-alpha-lysine (L-lysine). The protein is L-lysine 2,3-aminomutase (epmB) of Haemophilus influenzae (strain ATCC 51907 / DSM 11121 / KW20 / Rd).